Consider the following 358-residue polypeptide: Protein-glutamate methylesterase/protein-glutamine glutaminase 3 (358 aa).

The Response regulatory domain occupies 2-118 (KILVVDDSAL…CGRLQEVAPL (117 aa)). Position 52 is a 4-aspartylphosphate (aspartate 52). Residues 155-325 (NNEDHQLAIM…VPSMPEALLK (171 aa)) form the CheB-type methylesterase domain. Active-site residues include serine 167, histidine 194, and aspartate 291.

It belongs to the CheB family. In terms of processing, phosphorylated by CheA. Phosphorylation of the N-terminal regulatory domain activates the methylesterase activity.

It is found in the cytoplasm. The catalysed reaction is [protein]-L-glutamate 5-O-methyl ester + H2O = L-glutamyl-[protein] + methanol + H(+). It carries out the reaction L-glutaminyl-[protein] + H2O = L-glutamyl-[protein] + NH4(+). Involved in chemotaxis. Part of a chemotaxis signal transduction system that modulates chemotaxis in response to various stimuli. Catalyzes the demethylation of specific methylglutamate residues introduced into the chemoreceptors (methyl-accepting chemotaxis proteins or MCP) by CheR. Also mediates the irreversible deamidation of specific glutamine residues to glutamic acid. This Vibrio cholerae serotype O1 (strain ATCC 39315 / El Tor Inaba N16961) protein is Protein-glutamate methylesterase/protein-glutamine glutaminase 3.